A 310-amino-acid polypeptide reads, in one-letter code: MAGNSQRRGAIRKSGTKKGTSVGSGGQRRRGLEGRGPTPPAHMRPNHPAAKRAKAQQRRPARGRTDETETVLGRNPVLECLRAGVPSTALYVALGVEADERLTESVSRAADSGIPILEVPRTDLDRMTANHLHQGIALQVPPYNYAHPDDLLAAALDTPPALLVALDNISDPRNLGAIVRSVAAFGGHGVLIPQRRSASVTAVAWRTSAGAAARMPVARATNLTRALKDWADRGVRVVGLDAGGDTAIDDLDGSDPIVVVVGSEGKGLSRLVRQTCDEVVSVPMAGPTESLNASVAAGVVLAEIARQRRT.

Residues 1–70 (MAGNSQRRGA…ARGRTDETET (70 aa)) form a disordered region. Positions 49–62 (AAKRAKAQQRRPAR) are enriched in basic residues. G262, V282, and L291 together coordinate S-adenosyl-L-methionine.

Belongs to the class IV-like SAM-binding methyltransferase superfamily. RNA methyltransferase TrmH family.

This is an uncharacterized protein from Mycobacterium marinum (strain ATCC BAA-535 / M).